A 479-amino-acid polypeptide reads, in one-letter code: Caspase-8 (479 aa).

Residues 1–216 (MDFSRNLYDI…TISDSPREQD (216 aa)) constitute a propeptide that is removed on maturation. DED domains lie at 2 to 80 (DFSR…TYLN) and 100 to 177 (AYRV…IIND). 2 positions are modified to phosphoserine: Ser-188 and Ser-211. The residue at position 224 (Lys-224) is an N6-acetyllysine. The active site involves His-317. The residue at position 334 (Tyr-334) is a Phosphotyrosine. Cys-360 is a catalytic residue. Positions 375–384 (SEEQPYLEMD) are excised as a propeptide. At Tyr-380 the chain carries Phosphotyrosine; by SRC. Ser-387 carries the phosphoserine; by CDK1 modification. Arg-413 carries the (Microbial infection) ADP-riboxanated arginine modification.

Belongs to the peptidase C14A family. In terms of assembly, heterotetramer that consists of two anti-parallel arranged heterodimers, each one formed by a 18 kDa (p18) and a 10 kDa (p10) subunit. Component of the death-induced signaling complex (DISC) composed of cell surface receptor FAS/CD95 or TNFRSF1A, adapter protein FADD and the CASP8 protease; recruitment of CASP8 to the complex is required for processing of CASP8 into the p18 and p10 subunits. Component of the AIM2 PANoptosome complex, a multiprotein complex that drives inflammatory cell death (PANoptosis). Interacts with CFLAR and PEA15. Interacts with TNFAIP8L2. Interacts with CASP8AP2. Interacts with RFFL and RNF34; negatively regulate CASP8 through proteasomal degradation. Interacts with NOL3; decreases CASP8 activity in a mitochondria localization- and phosphorylation-dependent manner and this interaction is dissociated by calcium. Interacts with UBR2ca. Interacts with RIPK1. Interacts with stimulated TNFRSF10B; this interaction is followed by CASP8 proteolytic cleavage and activation. Interacts (phosphorylated on Tyr-380) with PIK3R1. Interacts at the endoplasmic reticulum with a complex containing BCAP31, BAP29, BCL2 and/or BCL2L1. As to quaternary structure, (Microbial infection) Interacts with human cytomegalovirus/HHV-5 protein vICA/UL36; this interaction inhibits CASP8 activation. In terms of assembly, (Microbial infection) Interacts with NleF from pathogenic E.coli. (Microbial infection) Interacts with molluscum contagiosum virus protein MC160. As to quaternary structure, (Microbial infection) Interacts (via RIP homotypic interaction motif) with herpes simplex virus 1/HHV-1 protein RIR1/ICP6 (via RIP homotypic interaction motif); this interaction prevents necroptosis activation. In terms of assembly, (Microbial infection) Interacts (via RIP homotypic interaction motif) with herpes simplex virus 2/HHV-2 protein RIR1/ICP10 (via RIP homotypic interaction motif); this interaction prevents necroptosis activation. In terms of processing, generation of the p10 and p18 subunits requires association with the death-inducing signaling complex (DISC), whereas additional processing is likely due to the autocatalytic activity of the activated protease. GZMB and CASP10 can be involved in these processing events. Phosphorylation on Ser-387 during mitosis by CDK1 inhibits activation by proteolysis and prevents apoptosis. Phosphorylation on Tyr-380 by SRC is mediated by interaction with the SRC SH2 domain and does not affect dimerization or recruitment to the death-inducing signaling complex (DISC) but negatively regulates DISC-mediated processing and activation of CASP8, down-regulating its proapoptotic function. Phosphorylation on Tyr-380 also enhances localization to lamellipodia in migrating cells. Post-translationally, (Microbial infection) ADP-riboxanation by C.violaceum CopC blocks CASP8 processing, preventing CASP8 activation and ability to mediate extrinsic apoptosis. In terms of processing, (Microbial infection) Proteolytically cleaved by the cowpox virus CRMA death inhibitory protein. As to expression, isoform 1, isoform 5 and isoform 7 are expressed in a wide variety of tissues. Highest expression in peripheral blood leukocytes, spleen, thymus and liver. Barely detectable in brain, testis and skeletal muscle.

The protein resides in the cytoplasm. It is found in the nucleus. It localises to the cell projection. Its subcellular location is the lamellipodium. It carries out the reaction Strict requirement for Asp at position P1 and has a preferred cleavage sequence of (Leu/Asp/Val)-Glu-Thr-Asp-|-(Gly/Ser/Ala).. CASP8 activity is restricted by RIPK1. Inhibited by the effector protein NleF that is produced by pathogenic E.coli; this inhibits apoptosis. Its function is as follows. Thiol protease that plays a key role in programmed cell death by acting as a molecular switch for apoptosis, necroptosis and pyroptosis, and is required to prevent tissue damage during embryonic development and adulthood. Initiator protease that induces extrinsic apoptosis by mediating cleavage and activation of effector caspases responsible for FAS/CD95-mediated and TNFRSF1A-induced cell death. Cleaves and activates effector caspases CASP3, CASP4, CASP6, CASP7, CASP9 and CASP10. Binding to the adapter molecule FADD recruits it to either receptor FAS/TNFRSF6 or TNFRSF1A. The resulting aggregate called the death-inducing signaling complex (DISC) performs CASP8 proteolytic activation. The active dimeric enzyme is then liberated from the DISC and free to activate downstream apoptotic proteases. Proteolytic fragments of the N-terminal propeptide (termed CAP3, CAP5 and CAP6) are likely retained in the DISC. In addition to extrinsic apoptosis, also acts as a negative regulator of necroptosis: acts by cleaving RIPK1 at 'Asp-324', which is crucial to inhibit RIPK1 kinase activity, limiting TNF-induced apoptosis, necroptosis and inflammatory response. Also able to initiate pyroptosis by mediating cleavage and activation of gasdermin-C and -D (GSDMC and GSDMD, respectively): gasdermin cleavage promotes release of the N-terminal moiety that binds to membranes and forms pores, triggering pyroptosis. Initiates pyroptosis following inactivation of MAP3K7/TAK1. Also acts as a regulator of innate immunity by mediating cleavage and inactivation of N4BP1 downstream of TLR3 or TLR4, thereby promoting cytokine production. May participate in the Granzyme B (GZMB) cell death pathways. Cleaves PARP1 and PARP2. Independent of its protease activity, promotes cell migration following phosphorylation at Tyr-380. In terms of biological role, lacks the catalytic site and may interfere with the pro-apoptotic activity of the complex. Lacks the catalytic site and may interfere with the pro-apoptotic activity of the complex. Acts as an inhibitor of the caspase cascade. The polypeptide is Caspase-8 (Homo sapiens (Human)).